Here is a 212-residue protein sequence, read N- to C-terminus: ATP phosphoribosyltransferase (212 aa).

This sequence belongs to the ATP phosphoribosyltransferase family. Short subfamily. In terms of assembly, heteromultimer composed of HisG and HisZ subunits.

The protein localises to the cytoplasm. It carries out the reaction 1-(5-phospho-beta-D-ribosyl)-ATP + diphosphate = 5-phospho-alpha-D-ribose 1-diphosphate + ATP. The protein operates within amino-acid biosynthesis; L-histidine biosynthesis; L-histidine from 5-phospho-alpha-D-ribose 1-diphosphate: step 1/9. Functionally, catalyzes the condensation of ATP and 5-phosphoribose 1-diphosphate to form N'-(5'-phosphoribosyl)-ATP (PR-ATP). Has a crucial role in the pathway because the rate of histidine biosynthesis seems to be controlled primarily by regulation of HisG enzymatic activity. The chain is ATP phosphoribosyltransferase from Geobacter metallireducens (strain ATCC 53774 / DSM 7210 / GS-15).